A 1074-amino-acid polypeptide reads, in one-letter code: Formin-G (1074 aa).

Residues 34 to 423 (LQMQQGSKTY…DKINEFEKKI (390 aa)) enclose the GBD/FH3 domain. Disordered stretches follow at residues 476-507 (QSIS…DIQS) and 549-639 (FTPT…NPSS). Residues 481 to 503 (SQDSSNNQKASSSSSNTSTLNDS) are compositionally biased toward low complexity. Residues 502-530 (DSDIQSIQSSLKEATLEIERLKLAIEEKM) adopt a coiled-coil conformation. Polar residues predominate over residues 549–561 (FTPTSPDISNDGQ). Residues 568 to 610 (APPPSPSPPPPISGGGAPPPPPPPPPPPSGGGAPPPPPPPPPS) show a composition bias toward pro residues. The FH1 domain maps to 597–623 (GGGAPPPPPPPPPSGGKKAGAPGAPPT). Positions 631 to 1031 (NKPVINPSSK…ASGDNGAVQN (401 aa)) constitute an FH2 domain. Positions 914–971 (DINDLEKQFNISKNNCKKVLEANIPSSSKFQSTIGSFLEKTEIDIKNLKENQKNIVDS) form a coiled coil. Residues 1037–1073 (GADPLAALANAIKLGQTGLRKRPGPENSSGGSQLNLN) form the DAD domain. Residues 1053–1074 (TGLRKRPGPENSSGGSQLNLNK) are disordered. Polar residues predominate over residues 1062-1074 (ENSSGGSQLNLNK).

This sequence belongs to the formin homology family. Diaphanous subfamily. Interacts (via GBD/FH3 domain) with activated Rho-GTPases.

Functionally, formins play an important role in the nucleation of actin and the formation of linear actin filaments. In Dictyostelium discoideum (Social amoeba), this protein is Formin-G (forG).